The following is a 554-amino-acid chain: Hydroxylamine reductase (554 aa).

4 residues coordinate [2Fe-2S] cluster: Cys-3, Cys-6, Cys-18, and Cys-25. The hybrid [4Fe-2O-2S] cluster site is built by His-252, Glu-276, Cys-320, Cys-408, Cys-436, Cys-461, Glu-495, and Lys-497. Position 408 is a cysteine persulfide (Cys-408).

Belongs to the HCP family. [2Fe-2S] cluster is required as a cofactor. Requires hybrid [4Fe-2O-2S] cluster as cofactor.

The protein localises to the cytoplasm. It carries out the reaction A + NH4(+) + H2O = hydroxylamine + AH2 + H(+). In terms of biological role, catalyzes the reduction of hydroxylamine to form NH(3) and H(2)O. This chain is Hydroxylamine reductase, found in Shewanella oneidensis (strain ATCC 700550 / JCM 31522 / CIP 106686 / LMG 19005 / NCIMB 14063 / MR-1).